A 424-amino-acid chain; its full sequence is Proline--tRNA ligase (424 aa).

It belongs to the class-II aminoacyl-tRNA synthetase family. ProS type 2 subfamily. In terms of assembly, homodimer.

It is found in the cytoplasm. It carries out the reaction tRNA(Pro) + L-proline + ATP = L-prolyl-tRNA(Pro) + AMP + diphosphate. Its function is as follows. Catalyzes the attachment of proline to tRNA(Pro) in a two-step reaction: proline is first activated by ATP to form Pro-AMP and then transferred to the acceptor end of tRNA(Pro). The protein is Proline--tRNA ligase of Ehrlichia chaffeensis (strain ATCC CRL-10679 / Arkansas).